Consider the following 412-residue polypeptide: Glucose/galactose transporter (412 aa).

The next 11 helical transmembrane spans lie at 21–41 (YGFA…ITCL), 62–82 (LIQF…GQLV), 90–110 (GIVV…PAAS), 113–133 (VYAL…ILQV), 158–178 (FNSL…LSAA), 192–212 (FPYL…AILK), 239–259 (LGAI…SFLV), 310–330 (AFVA…IAMW), 331–351 (SVLA…SLAL), 363–383 (GILC…GALA), and 388–408 (IHLA…YGLI).

It belongs to the major facilitator superfamily. FHS transporter (TC 2.A.1.7) family.

The protein resides in the cell inner membrane. Intake of glucose and galactose. The sequence is that of Glucose/galactose transporter (gluP) from Brucella abortus (strain 2308).